A 288-amino-acid chain; its full sequence is NAD kinase (288 aa).

Residue D70 is the Proton acceptor of the active site. Residues 70-71 (DG), 144-145 (ND), R155, K172, D174, 185-190 (TGYSLS), and Q245 contribute to the NAD(+) site.

The protein belongs to the NAD kinase family. Requires a divalent metal cation as cofactor.

Its subcellular location is the cytoplasm. It catalyses the reaction NAD(+) + ATP = ADP + NADP(+) + H(+). Its function is as follows. Involved in the regulation of the intracellular balance of NAD and NADP, and is a key enzyme in the biosynthesis of NADP. Catalyzes specifically the phosphorylation on 2'-hydroxyl of the adenosine moiety of NAD to yield NADP. This Citrifermentans bemidjiense (strain ATCC BAA-1014 / DSM 16622 / JCM 12645 / Bem) (Geobacter bemidjiensis) protein is NAD kinase.